Here is an 895-residue protein sequence, read N- to C-terminus: Stonin-2 (895 aa).

Disordered stretches follow at residues 15–119 (WVSF…PPHK), 145–222 (SESS…APPV), and 234–280 (EDNE…KSTL). Over residues 64–73 (SHSEQDDSSE) the composition is skewed to basic and acidic residues. Residues 145–193 (SESSWTTHSEDTSSPSVAPSYTDLQLINTEEQASGRASGTDSTDNSSSL) show a composition bias toward polar residues. A compositionally biased stretch (pro residues) spans 241–251 (PSPPVPSPKKP). The residue at position 253 (T253) is a Phosphothreonine. S278 and S299 each carry phosphoserine. 2 short sequence motifs (NPF) span residues 310-312 (NPF) and 326-328 (NPF). Residues 386-421 (QIDDPDPVGNTALPDDDPTASVELDAPSPASALSQP) form a disordered region. The SHD domain maps to 424-557 (GWPMMLRIPE…DLPVLSMDLS (134 aa)). The 308-residue stretch at 565 to 872 (EEEITVDVRD…AHYSYKVEIE (308 aa)) folds into the MHD domain. Position 759 is a phosphoserine (S759).

The protein belongs to the Stoned B family. Interacts with the second C2 domain of synaptotagmins SYT1 and SYT2. Interacts with EPS15, EPS15R and ITSN1. Interacts indirectly with the AP-2 adapter complex. Interacts with TOR1A and COPS4; the interaction controls STON2 protein stability. In terms of processing, phosphorylated in vitro by PKD. Post-translationally, neddylated; deneddylated via its interaction with the COP9 signalosome (CSN) complex through TOR1A and COPS4. Ubiquitinated; leading to its degradation.

It localises to the cytoplasm. It is found in the membrane. Its subcellular location is the synapse. The protein localises to the synaptosome. In terms of biological role, adapter protein involved in endocytic machinery. Involved in the synaptic vesicle recycling. May facilitate clathrin-coated vesicle uncoating. The polypeptide is Stonin-2 (Ston2) (Mus musculus (Mouse)).